The primary structure comprises 258 residues: Pimeloyl-[acyl-carrier protein] methyl ester esterase (258 aa).

In terms of domain architecture, AB hydrolase-1 spans Leu16–His241. Residues Trp22, Ser82–Met83, and Phe143–Gln147 each bind substrate. Ser82 (nucleophile) is an active-site residue. Residues Asp207 and His235 contribute to the active site. His235 contributes to the substrate binding site.

This sequence belongs to the AB hydrolase superfamily. Carboxylesterase BioH family. Monomer.

It is found in the cytoplasm. The catalysed reaction is 6-carboxyhexanoyl-[ACP] methyl ester + H2O = 6-carboxyhexanoyl-[ACP] + methanol + H(+). It participates in cofactor biosynthesis; biotin biosynthesis. Its function is as follows. The physiological role of BioH is to remove the methyl group introduced by BioC when the pimeloyl moiety is complete. It allows to synthesize pimeloyl-ACP via the fatty acid synthetic pathway through the hydrolysis of the ester bonds of pimeloyl-ACP esters. This is Pimeloyl-[acyl-carrier protein] methyl ester esterase from Yersinia enterocolitica serotype O:8 / biotype 1B (strain NCTC 13174 / 8081).